Here is a 142-residue protein sequence, read N- to C-terminus: Hemoglobin subunit theta-1 (142 aa).

The Globin domain maps to 2–142; that stretch reads ALSAEDRALV…VISALASEYR (141 aa). Heme b-binding residues include histidine 59 and histidine 88.

Belongs to the globin family.

The sequence is that of Hemoglobin subunit theta-1 (HBQ1) from Pongo pygmaeus (Bornean orangutan).